A 371-amino-acid polypeptide reads, in one-letter code: Trans-enoyl reductase mycC (371 aa).

51–54 (CDWK) contributes to the NADP(+) binding site. Substrate is bound at residue 140-147 (CVVGTVGL). Residues 182–185 (STAS), 205–208 (SPAN), Y223, and 270–271 (FE) contribute to the NADP(+) site. 291-295 (GIRLL) provides a ligand contact to substrate. 361-362 (VS) contributes to the NADP(+) binding site.

It belongs to the zinc-containing alcohol dehydrogenase family. Monomer.

It catalyses the reaction L-leucine + 8 malonyl-CoA + 4 S-adenosyl-L-methionine + ATP + 9 NADPH + 12 H(+) = (5S)-5-(2-methylpropyl)-3-[(2E,6R,8E,10E,12E)-6,8,10,12-tetramethyltetradeca-2,8,10,12-tetraenoyl]-2,5-dihydro-1H-pyrrol-2-one + AMP + 4 S-adenosyl-L-homocysteine + 8 CO2 + diphosphate + 9 NADP(+) + 8 CoA + 7 H2O. Its pathway is mycotoxin biosynthesis. Functionally, trans-enoyl reductase; part of the gene cluster that mediates the biosynthesis of myceliothermophins, mycotoxins that contain a trans-fused decalin ring system connected to a conjugated 3-pyrrolin-2-one moiety and that have potential anti-tumor properties. The polyketide synthase module (PKS) of the PKS-NRPS mycA is responsible for the synthesis of the octaketide backbone. The downstream nonribosomal peptide synthetase (NRPS) module then amidates the carboxyl end of the octaketide with a leucine. A reductase-like domain (R) at the C-terminus catalyzes the reductive release of the polyketide-amino acid intermediate. Because mycA lacks a designated enoylreductase (ER) domain, the required activity is provided the enoyl reductase mycC. Following mycA-catalyzed construction and release of aminoacyl polyketide aldehyde, Knoevenagel condensation yields the expected ketone. This C18 keto acyclic precursor is the substrate of the Diels-Alderase mycB, that catalyzes the Diels-Alder cycloaddition to produce myceliothermophin E. A yet unknown oxygenase involved in the production of myceliothermophin A, via substitution with a hydroxyl group at the C21, has still to be identified. The polypeptide is Trans-enoyl reductase mycC (Thermothelomyces thermophilus (strain ATCC 42464 / BCRC 31852 / DSM 1799) (Sporotrichum thermophile)).